The following is a 530-amino-acid chain: uncharacterized protein (530 aa).

A run of 5 helical transmembrane segments spans residues 4 to 23 (FLAANPLIALAVILAVGLAI), 28 to 47 (LFGVSLGAAAVLIVALVVST), 57 to 79 (FVFQLGLAMFVYVIGISAGPAFF), 91 to 113 (LFMITLLVSLTALAWVLIRAFGL), and 148 to 170 (VIGYSLAYPGAVLGSILVAAVGA). The 85-residue stretch at 260-344 (LGGECDTKIE…MGEVRRFLGD (85 aa)) folds into the RCK C-terminal domain. 4 helical membrane-spanning segments follow: residues 352-374 (VNLLPFAIGLSLGLLLGAIPVPL), 379-398 (TMYLGFGGGPIVAGLILGAL), 419-441 (LGLALFLAGVGTSAGAGFRQALT), and 451-473 (VGFAITVTSALVCAVVGMWLLKL).

Belongs to the AAE transporter (TC 2.A.81) family.

Its subcellular location is the cell membrane. This is an uncharacterized protein from Corynebacterium efficiens (strain DSM 44549 / YS-314 / AJ 12310 / JCM 11189 / NBRC 100395).